The primary structure comprises 61 residues: UPF0312 protein (61 aa).

Belongs to the UPF0312 family.

This Delftia acidovorans (Pseudomonas acidovorans) protein is UPF0312 protein.